A 317-amino-acid polypeptide reads, in one-letter code: ADP-L-glycero-D-manno-heptose-6-epimerase (317 aa).

NADP(+)-binding positions include 10–11, 31–32, K38, K53, 75–79, and N92; these read FI, DD, and QGACS. Y139 (proton acceptor) is an active-site residue. K143 provides a ligand contact to NADP(+). Position 166 (N166) interacts with substrate. NADP(+) contacts are provided by V167 and K175. The Proton acceptor role is filled by K175. Substrate-binding positions include G177, H184, 198 to 201, R211, and Y275; that span reads FQGH.

The protein belongs to the NAD(P)-dependent epimerase/dehydratase family. HldD subfamily. Homopentamer. Requires NADP(+) as cofactor.

The enzyme catalyses ADP-D-glycero-beta-D-manno-heptose = ADP-L-glycero-beta-D-manno-heptose. It participates in nucleotide-sugar biosynthesis; ADP-L-glycero-beta-D-manno-heptose biosynthesis; ADP-L-glycero-beta-D-manno-heptose from D-glycero-beta-D-manno-heptose 7-phosphate: step 4/4. Its function is as follows. Catalyzes the interconversion between ADP-D-glycero-beta-D-manno-heptose and ADP-L-glycero-beta-D-manno-heptose via an epimerization at carbon 6 of the heptose. This chain is ADP-L-glycero-D-manno-heptose-6-epimerase, found in Shewanella loihica (strain ATCC BAA-1088 / PV-4).